Reading from the N-terminus, the 141-residue chain is Protein C19orf12 homolog (141 aa).

The helical transmembrane segment at 37 to 57 (AVAFVGGLVGGPPGLAVGGAV) threads the bilayer.

The protein belongs to the C19orf12 family.

Its subcellular location is the mitochondrion. The protein localises to the mitochondrion membrane. It is found in the endoplasmic reticulum. The protein resides in the cytoplasm. It localises to the cytosol. The polypeptide is Protein C19orf12 homolog (Bos taurus (Bovine)).